The sequence spans 195 residues: Protein A43 (195 aa).

A signal peptide spans 1–21; that stretch reads MMIKWIISILTMSIMPVLVYS. At 23-166 the chain is on the extracellular side; the sequence is SIFRFRSEDV…YKDINDKYND (144 aa). N-linked (GlcNAc...) asparagine; by host glycans are attached at residues Asn-66 and Asn-115. Residues 167 to 187 traverse the membrane as a helical segment; the sequence is IYDFTAICMLIASTLIVTIYV. Residues 188-195 lie on the Cytoplasmic side of the membrane; sequence FKKIKMNS.

Belongs to the orthopoxvirus OPG172 protein family.

It is found in the host membrane. The protein localises to the host cell surface. The sequence is that of Protein A43 (OPG172) from Homo sapiens (Human).